Reading from the N-terminus, the 404-residue chain is G1/S-specific cyclin-E2 (404 aa).

Residues 1-45 (MSRRSSRLQAKQQPQASQTDSPQEAQIIQAKKRKTAQDVKKRKEE) are disordered. Polar residues predominate over residues 7-26 (RLQAKQQPQASQTDSPQEAQ). S21 bears the Phosphoserine mark. A compositionally biased stretch (basic and acidic residues) spans 35–45 (TAQDVKKRKEE). Residue K348 is modified to N6-lactoyllysine. S383 carries the phosphoserine modification. T392 carries the post-translational modification Phosphothreonine.

It belongs to the cyclin family. Cyclin E subfamily. Interacts with the CDK2 (in vivo) and CDK3 (in vitro) protein kinases to form a serine/threonine kinase holoenzyme complex. The cyclin subunit imparts substrate specificity to the complex. In terms of processing, phosphorylation by CDK2 triggers its release from CDK2 and degradation via the ubiquitin proteasome pathway. Lactylated at Lys-348. Delactylated by SIRT3.

It localises to the nucleus. Functionally, essential for the control of the cell cycle at the late G1 and early S phase. This is G1/S-specific cyclin-E2 (CCNE2) from Bos taurus (Bovine).